Consider the following 144-residue polypeptide: Superoxide dismutase [Mn] 1 (144 aa).

3 residues coordinate Mn(2+): H42, D124, and H128.

It belongs to the iron/manganese superoxide dismutase family. Requires Mn(2+) as cofactor.

The enzyme catalyses 2 superoxide + 2 H(+) = H2O2 + O2. In terms of biological role, destroys superoxide anion radicals which are normally produced within the cells and which are toxic to biological systems. This chain is Superoxide dismutase [Mn] 1 (sod1), found in Haloferax mediterranei (Halobacterium mediterranei).